Consider the following 307-residue polypeptide: Aspartate carbamoyltransferase catalytic subunit (307 aa).

Carbamoyl phosphate contacts are provided by R54 and T55. Residue K83 participates in L-aspartate binding. Positions 104, 132, and 135 each coordinate carbamoyl phosphate. R165 and R228 together coordinate L-aspartate. The carbamoyl phosphate site is built by L267 and P268.

Belongs to the aspartate/ornithine carbamoyltransferase superfamily. ATCase family. In terms of assembly, heterododecamer (2C3:3R2) of six catalytic PyrB chains organized as two trimers (C3), and six regulatory PyrI chains organized as three dimers (R2).

The enzyme catalyses carbamoyl phosphate + L-aspartate = N-carbamoyl-L-aspartate + phosphate + H(+). The protein operates within pyrimidine metabolism; UMP biosynthesis via de novo pathway; (S)-dihydroorotate from bicarbonate: step 2/3. Functionally, catalyzes the condensation of carbamoyl phosphate and aspartate to form carbamoyl aspartate and inorganic phosphate, the committed step in the de novo pyrimidine nucleotide biosynthesis pathway. In Clostridium acetobutylicum (strain ATCC 824 / DSM 792 / JCM 1419 / IAM 19013 / LMG 5710 / NBRC 13948 / NRRL B-527 / VKM B-1787 / 2291 / W), this protein is Aspartate carbamoyltransferase catalytic subunit.